The following is a 790-amino-acid chain: Ribosome biogenesis protein ERB1 (790 aa).

Residues 1-93 (MAKKNTVTGS…SDELQDDSNS (93 aa)) form a disordered region. The segment covering 20–89 (SPEVSESEEI…SEDFSDELQD (70 aa)) has biased composition (acidic residues). Residues 255–371 (RFVPSKHEAK…LRKVPAYQEN (117 aa)) form a required for interaction with NOP7 region. Positions 371-407 (NLRERFERSLDLYLAPRVRHNKLNIDPDSLIPDLPSP) are required for interaction with YTM1. WD repeat units lie at residues 423–462 (GHIG…QVYH), 470–510 (KDDD…YEIE), 574–616 (QCRK…SQSP), 619–657 (KSKG…LTKK), 660–699 (PGAR…TPYK), 703–743 (YHEK…DLMT), and 759–790 (VHSL…LWTT).

Belongs to the WD repeat BOP1/ERB1 family. Component of the NOP7 complex, composed of ERB1, NOP7 and YTM1. The complex is held together by ERB1, which interacts with NOP7 via its N-terminal domain and with YTM1 via a high-affinity interaction between the seven-bladed beta-propeller domains of the 2 proteins. The NOP7 complex associates with the 66S pre-ribosome.

Its subcellular location is the nucleus. The protein localises to the nucleolus. The protein resides in the nucleoplasm. Functionally, component of the NOP7 complex, which is required for maturation of the 25S and 5.8S ribosomal RNAs and formation of the 60S ribosome. This is Ribosome biogenesis protein ERB1 from Meyerozyma guilliermondii (strain ATCC 6260 / CBS 566 / DSM 6381 / JCM 1539 / NBRC 10279 / NRRL Y-324) (Yeast).